The sequence spans 191 residues: dCTP deaminase, dUMP-forming (191 aa).

Residues 101–106 (KSSLGR), Asp-119, 127–129 (TLE), Gln-148, Tyr-162, and Gln-174 each bind dCTP. The Proton donor/acceptor role is filled by Glu-129. The tract at residues 169–191 (SRYQGQRGPTASRSFQNFHRTQV) is disordered. Residues 171 to 191 (YQGQRGPTASRSFQNFHRTQV) show a composition bias toward polar residues.

It belongs to the dCTP deaminase family. In terms of assembly, homotrimer.

The catalysed reaction is dCTP + 2 H2O = dUMP + NH4(+) + diphosphate. It participates in pyrimidine metabolism; dUMP biosynthesis; dUMP from dCTP: step 1/1. In terms of biological role, bifunctional enzyme that catalyzes both the deamination of dCTP to dUTP and the hydrolysis of dUTP to dUMP without releasing the toxic dUTP intermediate. In Streptomyces griseus subsp. griseus (strain JCM 4626 / CBS 651.72 / NBRC 13350 / KCC S-0626 / ISP 5235), this protein is dCTP deaminase, dUMP-forming.